The chain runs to 411 residues: Inhibin beta B chain (411 aa).

An N-terminal signal peptide occupies residues 1-28; sequence MDGLPGRALGAACLLLLAAGWLGPEAWG. Positions 27–69 are disordered; sequence WGSPTPPPSPAAPPPPPPPGAPGGSQDTCTSCGGGGGGFRRPE. The propeptide occupies 29 to 296; that stretch reads SPTPPPSPAA…GDSRHRIRKR (268 aa). Residues 30–47 show a composition bias toward pro residues; sequence PTPPPSPAAPPPPPPPGA. Residue asparagine 97 is glycosylated (N-linked (GlcNAc...) asparagine). Cystine bridges form between cysteine 300/cysteine 308, cysteine 307/cysteine 376, cysteine 336/cysteine 408, and cysteine 340/cysteine 410.

It belongs to the TGF-beta family. As to quaternary structure, dimeric, linked by one or more disulfide bonds. Inhibin B is a dimer of alpha and beta-B. Activin B is a homodimer of beta-B. Activin AB is a dimer of beta-A and beta-B. Interacts with FST and FSTL3. In terms of tissue distribution, alpha- and beta-B subunits are the predominant forms found in rat testis. Also expressed in ovary.

Its subcellular location is the secreted. In terms of biological role, inhibins and activins inhibit and activate, respectively, the secretion of follitropin by the pituitary gland. Inhibins/activins are involved in regulating a number of diverse functions such as hypothalamic and pituitary hormone secretion, gonadal hormone secretion, germ cell development and maturation, erythroid differentiation, insulin secretion, nerve cell survival, embryonic axial development or bone growth, depending on their subunit composition. Inhibins appear to oppose the functions of activins. Its function is as follows. Activin B is a dimer of alpha and beta-B that plays a role in several essential biological processes including embryonic development, stem cell maintenance and differentiation, haematopoiesis, cell proliferation and wound healing. Signals through type I receptor ACVR1C, abundantly expressed in pancreatic beta cells, and type II receptors like ACVR2A. Upon ligand binding, these receptors phosphorylate intracellular signaling mediators SMAD2 and SMAD3, which form a complex with SMAD4, translocate to the nucleus, and regulate gene expression. Plays a crucial role in the induction of hepcidin by inflammation through activation of ACVR1C and subsequent phosphorylation of SMAD1/5/8. Regulates adipocyte lipid metabolism by decreasing non-esterified fatty acids and glycerol release and increases intracellular triglyceride content. Stimulates wound healing by promoting cell migration and hair follicle regeneration through the JNK and ERK signaling pathways downstream of RHOA. Inhibin B is a dimer of alpha and beta-B that plays a crucial role in the regulation of the reproductive system by inhibiting the secretion of follicle-stimulating hormone (FSH) from the anterior pituitary gland. Thereby, maintains reproductive homeostasis in both males and females. Acts as a more potent suppressor of FSH release than inhibin A. Functions as competitive receptor antagonist binding activin type II receptors with high affinity in the presence of the TGF-beta type III coreceptor/TGFBR3L. This chain is Inhibin beta B chain (Inhbb), found in Rattus norvegicus (Rat).